We begin with the raw amino-acid sequence, 308 residues long: MRLVFAGTPEPALPSLQRLIASPRHEVVAVLTRPDAAAGRRGRPTPSPVARLALDHDIPVLRPPKPNSEEFVAELRELAPDCCAVVAYGALLSERLLAVPPHGWINLHFSLLPAWRGAAPVQAAIAAGDAVTGATTFLIEPALDSGPVYGVVTETIRANDTAGELLTRLAESGAHLLESTLDGIADGRLQAVPQPADGVTVAPKITVDEARVRWDLPAHVVDRRIRAVTPNPGAWTVIGDARVKLGPVAPESAEPLAPGAIRVLKNAVHVGTATEPVRLGTVQPPGKKPMNAADWARGARLDASVSAQ.

(6S)-5,6,7,8-tetrahydrofolate is bound at residue 110 to 113 (SLLP).

The protein belongs to the Fmt family.

The enzyme catalyses L-methionyl-tRNA(fMet) + (6R)-10-formyltetrahydrofolate = N-formyl-L-methionyl-tRNA(fMet) + (6S)-5,6,7,8-tetrahydrofolate + H(+). Functionally, attaches a formyl group to the free amino group of methionyl-tRNA(fMet). The formyl group appears to play a dual role in the initiator identity of N-formylmethionyl-tRNA by promoting its recognition by IF2 and preventing the misappropriation of this tRNA by the elongation apparatus. This is Methionyl-tRNA formyltransferase from Mycobacterium sp. (strain KMS).